The following is a 658-amino-acid chain: ATP-dependent DNA helicase Rep (658 aa).

Positions 1 to 280 (MSLNFNQKNA…IKMEQNYRSY (280 aa)) constitute a UvrD-like helicase ATP-binding domain. Residues 22–29 (AGAGSGKT) and arginine 278 each bind ATP. In terms of domain architecture, UvrD-like helicase C-terminal spans 281–564 (GRILKAANKL…QLMTLHSSKG (284 aa)).

This sequence belongs to the helicase family. UvrD subfamily. In terms of assembly, homodimer.

It carries out the reaction Couples ATP hydrolysis with the unwinding of duplex DNA by translocating in the 3'-5' direction.. The enzyme catalyses ATP + H2O = ADP + phosphate + H(+). Functionally, rep helicase is a single-stranded DNA-dependent ATPase involved in DNA replication; it can initiate unwinding at a nick in the DNA. It binds to the single-stranded DNA and acts in a progressive fashion along the DNA in the 3' to 5' direction. The chain is ATP-dependent DNA helicase Rep from Buchnera aphidicola subsp. Schizaphis graminum (strain Sg).